Reading from the N-terminus, the 251-residue chain is Hydroxyacylglutathione hydrolase (251 aa).

Zn(2+) contacts are provided by His-53, His-55, Asp-57, His-58, His-110, Asp-127, and His-165.

It belongs to the metallo-beta-lactamase superfamily. Glyoxalase II family. In terms of assembly, monomer. Requires Zn(2+) as cofactor.

It catalyses the reaction an S-(2-hydroxyacyl)glutathione + H2O = a 2-hydroxy carboxylate + glutathione + H(+). It participates in secondary metabolite metabolism; methylglyoxal degradation; (R)-lactate from methylglyoxal: step 2/2. In terms of biological role, thiolesterase that catalyzes the hydrolysis of S-D-lactoyl-glutathione to form glutathione and D-lactic acid. The chain is Hydroxyacylglutathione hydrolase from Escherichia fergusonii (strain ATCC 35469 / DSM 13698 / CCUG 18766 / IAM 14443 / JCM 21226 / LMG 7866 / NBRC 102419 / NCTC 12128 / CDC 0568-73).